A 451-amino-acid polypeptide reads, in one-letter code: Phenolic glucoside malonyltransferase 2 (451 aa).

H165 serves as the catalytic Proton acceptor. The short motif at 165–169 (HAVLD) is the HXXXD motif element. Residues H270 and 272 to 273 (ST) each bind malonyl-CoA. The active-site Proton acceptor is the D395. The DFGWG motif motif lies at 395 to 399 (DFGWG).

The protein belongs to the plant acyltransferase family. Phenolic glucoside malonyltransferase subfamily.

The enzyme catalyses a flavonol 7-O-beta-D-glucoside + malonyl-CoA = a flavonol 7-O-(6-O-malonyl-beta-D-glucoside) + CoA. Functionally, malonyltransferase acting on xenobiotic glucosides. Has activity toward 2-Naphthol glucoside (2NAG), 1-Naphthol glucoside (1NAG), kaempferol 7-O-glucoside, hydroxycoumarin glucosides and phenol-glucosides, but not toward kaempferol 3-O-glucoside or daidzin. Prefers phenol glucosides rather than naphtol glucosides. In vivo, seems to be involved in the malonylation of 4-methylumbelliferone glucoside or 4-nitrophenyl glucoside while PMAT1 would be involved in the malonylation of 2-Naphthol glucoside. This is Phenolic glucoside malonyltransferase 2 (PMAT2) from Arabidopsis thaliana (Mouse-ear cress).